Reading from the N-terminus, the 327-residue chain is Dolichyl-phosphate beta-glucosyltransferase (327 aa).

Over methionine 1–glycine 15 the chain is Lumenal. Residues isoleucine 16 to leucine 36 form a helical membrane-spanning segment. At histidine 37–serine 327 the chain is on the cytoplasmic side.

It belongs to the glycosyltransferase 2 family.

Its subcellular location is the endoplasmic reticulum membrane. It catalyses the reaction a di-trans,poly-cis-dolichyl phosphate + UDP-alpha-D-glucose = a di-trans,poly-cis-dolichyl beta-D-glucosyl phosphate + UDP. The protein operates within protein modification; protein glycosylation. Functionally, endoplasmic reticulum membrane-bound UDP-glucose:dolichyl-phosphate glucosyltransferase involved in protein N-linked glycosylation. In Dictyostelium discoideum (Social amoeba), this protein is Dolichyl-phosphate beta-glucosyltransferase (alg5).